A 281-amino-acid chain; its full sequence is Release factor glutamine methyltransferase (281 aa).

Residues Glu141 and Asn185 each contribute to the S-adenosyl-L-methionine site. 185–188 (NPPY) provides a ligand contact to substrate.

It belongs to the protein N5-glutamine methyltransferase family. PrmC subfamily.

The enzyme catalyses L-glutaminyl-[peptide chain release factor] + S-adenosyl-L-methionine = N(5)-methyl-L-glutaminyl-[peptide chain release factor] + S-adenosyl-L-homocysteine + H(+). Its function is as follows. Methylates the class 1 translation termination release factors RF1/PrfA and RF2/PrfB on the glutamine residue of the universally conserved GGQ motif. In Mycolicibacterium smegmatis (strain ATCC 700084 / mc(2)155) (Mycobacterium smegmatis), this protein is Release factor glutamine methyltransferase.